The sequence spans 456 residues: Probable glycine dehydrogenase (decarboxylating) subunit 1 (456 aa).

This sequence belongs to the GcvP family. N-terminal subunit subfamily. As to quaternary structure, the glycine cleavage system is composed of four proteins: P, T, L and H. In this organism, the P 'protein' is a heterodimer of two subunits.

It catalyses the reaction N(6)-[(R)-lipoyl]-L-lysyl-[glycine-cleavage complex H protein] + glycine + H(+) = N(6)-[(R)-S(8)-aminomethyldihydrolipoyl]-L-lysyl-[glycine-cleavage complex H protein] + CO2. The glycine cleavage system catalyzes the degradation of glycine. The P protein binds the alpha-amino group of glycine through its pyridoxal phosphate cofactor; CO(2) is released and the remaining methylamine moiety is then transferred to the lipoamide cofactor of the H protein. The polypeptide is Probable glycine dehydrogenase (decarboxylating) subunit 1 (Rhizorhabdus wittichii (strain DSM 6014 / CCUG 31198 / JCM 15750 / NBRC 105917 / EY 4224 / RW1) (Sphingomonas wittichii)).